A 124-amino-acid polypeptide reads, in one-letter code: Glucagon-1 (124 aa).

A signal peptide spans 1 to 25 (MKRIHSLAGILLVLGLIQSSCRVLM). Residues 28–54 (ADPSSSLEADSTLKDEPRELSNMKRHS) are disordered. Residues 38-54 (STLKDEPRELSNMKRHS) show a composition bias toward basic and acidic residues. A propeptide spanning residues 84–88 (SGVAE) is cleaved from the precursor.

It belongs to the glucagon family.

The protein localises to the secreted. In terms of biological role, glucagon plays a key role in glucose metabolism and homeostasis. Regulates blood glucose by increasing gluconeogenesis and decreasing glycolysis. This is Glucagon-1 (gcg1) from Lophius americanus (American angler).